Here is a 116-residue protein sequence, read N- to C-terminus: Nucleoid-associated protein A9601_00191 (116 aa).

The protein belongs to the YbaB/EbfC family. Homodimer.

It is found in the cytoplasm. The protein resides in the nucleoid. Binds to DNA and alters its conformation. May be involved in regulation of gene expression, nucleoid organization and DNA protection. The polypeptide is Nucleoid-associated protein A9601_00191 (Prochlorococcus marinus (strain AS9601)).